Here is a 138-residue protein sequence, read N- to C-terminus: Large ribosomal subunit protein bL17 (138 aa).

This sequence belongs to the bacterial ribosomal protein bL17 family. In terms of assembly, part of the 50S ribosomal subunit. Contacts protein L32.

The protein is Large ribosomal subunit protein bL17 of Methylorubrum extorquens (strain PA1) (Methylobacterium extorquens).